The primary structure comprises 102 residues: MYAIVKAGGHQEKVEVGDVILVNRLDAKKGDTVEFPVSLVVDGDKVTLAAADLAKVSVKAEVVNDEAKGPKISIQKYKNKTGVARRKGHRQKLTIVKITAIA.

Belongs to the bacterial ribosomal protein bL21 family. As to quaternary structure, part of the 50S ribosomal subunit. Contacts protein L20.

Functionally, this protein binds to 23S rRNA in the presence of protein L20. This is Large ribosomal subunit protein bL21 from Bifidobacterium longum (strain DJO10A).